Here is an 87-residue protein sequence, read N- to C-terminus: Antitoxin YefM (87 aa).

It belongs to the phD/YefM antitoxin family. Forms a complex with YoeB which inhibits its toxin activity.

In terms of biological role, antitoxin component of a type II toxin-antitoxin (TA) system. A probable antitoxin for the putative mRNA interferase YeoB. The protein is Antitoxin YefM of Streptomyces coelicolor (strain ATCC BAA-471 / A3(2) / M145).